The primary structure comprises 447 residues: UDP-N-acetylmuramate--L-alanine ligase (447 aa).

ATP is bound at residue 108 to 114; the sequence is GSHGKTS.

This sequence belongs to the MurCDEF family.

It is found in the cytoplasm. The enzyme catalyses UDP-N-acetyl-alpha-D-muramate + L-alanine + ATP = UDP-N-acetyl-alpha-D-muramoyl-L-alanine + ADP + phosphate + H(+). It participates in cell wall biogenesis; peptidoglycan biosynthesis. Cell wall formation. The chain is UDP-N-acetylmuramate--L-alanine ligase from Listeria monocytogenes serovar 1/2a (strain ATCC BAA-679 / EGD-e).